A 410-amino-acid chain; its full sequence is Aspartic proteinase Asp1 (410 aa).

Residues 1–23 (MTARLALLASLLLLLQLVPPSSA) form the signal peptide. The propeptide at 24 to 46 (VVLELHGNVYPIGHFFVTMNIGD) is removed in mature form. One can recognise a Peptidase A1 domain in the interval 38–392 (FFVTMNIGDP…DSERSLLGWV (355 aa)). Catalysis depends on residues Asp56 and Asp257.

Belongs to the peptidase A1 family. Expressed in pollen, nucellus, ovary wall, shoot and root meristem, coleoptiles of immature seeds, and somatic embryos.

In terms of biological role, possesses protease activity in vitro. The polypeptide is Aspartic proteinase Asp1 (ASP1) (Oryza sativa subsp. indica (Rice)).